A 322-amino-acid polypeptide reads, in one-letter code: MVHSKSLRIAFFGTTSFAAWHLHTLAHLSTHQIIAVFTQEIQISTCKSFLSLHKIAKKYNISLFQSRTLSISDIIYIIKKINVDLIVVVSYGLILPQEILNIPRLGCINVHGSLLPRWRGPAPIQRALEYGDSITGITIIQMDLGIDTGDILHIMPCKIFPKDTSCTLSNRLVNIGSAMLSQVLDQFILGTFTLIPQDSTYATYAHKLNKQEARINWNLSAIQLERCIRAFNPWPISFFQIKNDRIRVWDAEVSNQNINNYSSSTSILPGTILAAHPNGIYVVTGSGILILTMLQISGKKITSVRDLLNAYKEWFKPNSVLE.

(6S)-5,6,7,8-tetrahydrofolate is bound at residue 113-116; that stretch reads SLLP.

The protein belongs to the Fmt family.

It carries out the reaction L-methionyl-tRNA(fMet) + (6R)-10-formyltetrahydrofolate = N-formyl-L-methionyl-tRNA(fMet) + (6S)-5,6,7,8-tetrahydrofolate + H(+). Functionally, attaches a formyl group to the free amino group of methionyl-tRNA(fMet). The formyl group appears to play a dual role in the initiator identity of N-formylmethionyl-tRNA by promoting its recognition by IF2 and preventing the misappropriation of this tRNA by the elongation apparatus. This is Methionyl-tRNA formyltransferase from Blochmanniella pennsylvanica (strain BPEN).